The sequence spans 362 residues: Phosphate acyltransferase (362 aa).

Positions 343-362 (TKKISTSTINPKTSETTKES) are disordered. Polar residues predominate over residues 344 to 356 (KKISTSTINPKTS).

The protein belongs to the PlsX family. As to quaternary structure, homodimer. Probably interacts with PlsY.

The protein localises to the cytoplasm. It carries out the reaction a fatty acyl-[ACP] + phosphate = an acyl phosphate + holo-[ACP]. Its pathway is lipid metabolism; phospholipid metabolism. Functionally, catalyzes the reversible formation of acyl-phosphate (acyl-PO(4)) from acyl-[acyl-carrier-protein] (acyl-ACP). This enzyme utilizes acyl-ACP as fatty acyl donor, but not acyl-CoA. This is Phosphate acyltransferase from Aster yellows witches'-broom phytoplasma (strain AYWB).